Here is a 209-residue protein sequence, read N- to C-terminus: Bilin biosynthesis protein RpcF (209 aa).

It belongs to the CpcE/RpcE/PecE family.

In terms of biological role, an enzyme involved in the biosynthesis of bilin. Might be involved in the specific attachment of phycoerythrobilin (PEB) to the R-phycocyanin II alpha chain. The sequence is that of Bilin biosynthesis protein RpcF (rpcF) from Synechococcus sp. (strain WH8020).